The chain runs to 566 residues: Arginine--tRNA ligase (566 aa).

The 'HIGH' region motif lies at Ala121–His131.

This sequence belongs to the class-I aminoacyl-tRNA synthetase family.

It is found in the cytoplasm. It carries out the reaction tRNA(Arg) + L-arginine + ATP = L-arginyl-tRNA(Arg) + AMP + diphosphate. This chain is Arginine--tRNA ligase, found in Methanococcus maripaludis (strain C5 / ATCC BAA-1333).